The following is a 100-amino-acid chain: UPF0248 protein APE_0939 (100 aa).

This sequence belongs to the UPF0248 family.

In Aeropyrum pernix (strain ATCC 700893 / DSM 11879 / JCM 9820 / NBRC 100138 / K1), this protein is UPF0248 protein APE_0939.